Here is a 183-residue protein sequence, read N- to C-terminus: Translation initiation factor IF-3 (183 aa).

It belongs to the IF-3 family. Monomer.

The protein localises to the cytoplasm. Its function is as follows. IF-3 binds to the 30S ribosomal subunit and shifts the equilibrium between 70S ribosomes and their 50S and 30S subunits in favor of the free subunits, thus enhancing the availability of 30S subunits on which protein synthesis initiation begins. The protein is Translation initiation factor IF-3 of Azobacteroides pseudotrichonymphae genomovar. CFP2.